The following is a 1399-amino-acid chain: Meiosis-specific protein ASY2 (1399 aa).

The 239-residue stretch at 10–248 folds into the HORMA domain; the sequence is QQSLILTTEL…SQHHVLTVKV (239 aa). Residues 257–266 show a composition bias toward acidic residues; the sequence is PCEDENDNMQ. 5 disordered regions span residues 257–281, 487–525, 617–656, 940–974, and 1045–1090; these read PCED…HDDQ, SKPK…SSEP, RLTG…AAPE, PPPP…VDQV, and DQDK…AAPK. Residues 267-281 show a composition bias toward basic and acidic residues; that stretch reads DDERSKGPDSLHDDQ. Residues 509-523 are compositionally biased toward pro residues; that stretch reads SAPPSSEPKSAPPSS. Positions 617 to 631 are enriched in polar residues; that stretch reads RLTGNPSNEAQSSRS. Residues 1205–1246 are a coiled coil; the sequence is MASLRDAAEIHKAEMSSLNDEVKRLNSREADLQKEFSDLQVA.

It is found in the chromosome. The protein resides in the nucleus. Its function is as follows. Required for normal meiosis. This chain is Meiosis-specific protein ASY2, found in Arabidopsis thaliana (Mouse-ear cress).